A 325-amino-acid polypeptide reads, in one-letter code: Foldase protein PrsA (325 aa).

A signal peptide spans Met1 to Ala20. Cys21 is lipidated: N-palmitoyl cysteine. The S-diacylglycerol cysteine moiety is linked to residue Cys21. The PpiC domain maps to Glu139 to Lys245. Disordered stretches follow at residues Glu159–Lys200 and Pro303–Ser325.

It belongs to the PrsA family.

It localises to the cell membrane. The catalysed reaction is [protein]-peptidylproline (omega=180) = [protein]-peptidylproline (omega=0). In terms of biological role, plays a major role in protein secretion by helping the post-translocational extracellular folding of several secreted proteins. The polypeptide is Foldase protein PrsA (Staphylococcus epidermidis (strain ATCC 35984 / DSM 28319 / BCRC 17069 / CCUG 31568 / BM 3577 / RP62A)).